Reading from the N-terminus, the 883-residue chain is Phosphoenolpyruvate carboxylase (883 aa).

Residues His138 and Lys546 contribute to the active site.

This sequence belongs to the PEPCase type 1 family. Requires Mg(2+) as cofactor.

The enzyme catalyses oxaloacetate + phosphate = phosphoenolpyruvate + hydrogencarbonate. Forms oxaloacetate, a four-carbon dicarboxylic acid source for the tricarboxylic acid cycle. In Escherichia coli (strain 55989 / EAEC), this protein is Phosphoenolpyruvate carboxylase.